The following is a 278-amino-acid chain: Orotidine 5'-phosphate decarboxylase (278 aa).

The active-site Proton donor is the lysine 95.

The protein belongs to the OMP decarboxylase family. Type 2 subfamily.

It catalyses the reaction orotidine 5'-phosphate + H(+) = UMP + CO2. It participates in pyrimidine metabolism; UMP biosynthesis via de novo pathway; UMP from orotate: step 2/2. The chain is Orotidine 5'-phosphate decarboxylase from Mycobacterium marinum (strain ATCC BAA-535 / M).